A 130-amino-acid chain; its full sequence is uncharacterized protein (130 aa).

The interval Arg-48–Arg-130 is disordered. Residues Gly-80 to Ala-107 show a composition bias toward gly residues.

This is an uncharacterized protein from Aotus trivirgatus (Three-striped night monkey).